The sequence spans 352 residues: Proton-activated chloride channel (352 aa).

The interval 1–55 (MEAIRKELSRSYQELNEEAEPVAIDPEEAEDEEKEQEEAASAVAPDRDSDRSSPP) is disordered. Residues 1 to 65 (MEAIRKELSR…VRFSRTCLKN (65 aa)) are Cytoplasmic-facing. A compositionally biased stretch (acidic residues) spans 15-38 (LNEEAEPVAIDPEEAEDEEKEQEE). The helical transmembrane segment at 66 to 86 (FFSVLLILVYLLLMGVAVFLV) threads the bilayer. The Extracellular portion of the chain corresponds to 87–299 (YQTITDFRDK…KDPYIQEIQD (213 aa)). A helical transmembrane segment spans residues 300 to 320 (IITANPWSMIALLCSVFLVLF). The Cytoplasmic portion of the chain corresponds to 321 to 352 (KAADFAKLSVKWMIKVRRRHLKKRARELNHIS).

Belongs to the proton-activated chloride channel family.

The protein resides in the cell membrane. It carries out the reaction chloride(in) = chloride(out). Functionally, chloride channel gated by pH that facilitates the entry of chloride ions into cells upon exposure to extracellular acidic pH. This is Proton-activated chloride channel from Xenopus tropicalis (Western clawed frog).